The sequence spans 555 residues: MNNQAYGVTPPISVANSTPKENELNDSLIKELKSRGSFESETATKKRVEVLNILQSMTEEFVYKVSIKKNISEGMARDVGGKIFTFGSYRLGVYGPGSDIDTLVVVPKHVSRNDFFEVFYELLKGRSELEEIAPVPDAFVPIIKIEFAGISIDLIFARLDIPRVPRDLTLDDKNLLKNIDEKDLRALNGTRVTDEILQLVPKPTVFKHALRCIKMWAQQRAVYGNIFGFPGGVAWAMLVARICQLYPNAVSAVIVEKFFHIYSQWAWPQPVLLKQIEDGPLQVRVWNPRLYALDRQHRMPVITPAYPSMCATHNITSSTQKVILSEFQRGIELMNDINVGKKSWSDLLERHDFFFRYKFYLCIVAATRSTYAEHLKYSGMVESKLRLLVQKLELVEGIELAHPYVKSFENGYYCDNAEEAHEIMNLYGTSKGDDRVKGVLHAENNDNNKENVENKVELHMTKLFIGLKLDLSKEGEKKLDIQYPCAEFFNICKGWQDFDSEKHFIQIKNVKLYDLSDDVYVDGETRPIKIAKRKRAVSKNEGKKKPKSVGTVSAA.

Residues 1 to 20 (MNNQAYGVTPPISVANSTPK) form a disordered region. Residues 86–88 (FGS), 99–101 (DID), aspartate 153, lysine 214, tyrosine 223, and 232–233 (GV) each bind ATP. Aspartate 99, aspartate 101, and aspartate 153 together coordinate Mg(2+). Positions 532-555 (KRKRAVSKNEGKKKPKSVGTVSAA) are disordered.

It belongs to the poly(A) polymerase family. Mg(2+) serves as cofactor. It depends on Mn(2+) as a cofactor.

It is found in the nucleus. It catalyses the reaction RNA(n) + ATP = RNA(n)-3'-adenine ribonucleotide + diphosphate. In terms of biological role, polymerase that creates the 3'-poly(A) tail of mRNA's. May acquire specificity through interaction with a cleavage and polyadenylation factor. The protein is Poly(A) polymerase PAPa (PAPA) of Candida albicans (strain SC5314 / ATCC MYA-2876) (Yeast).